Reading from the N-terminus, the 153-residue chain is Agglutinin (153 aa).

Residues 22–25 (NAWE) and Asn46 contribute to the beta-D-galactosyl-(1-&gt;3)-N-acetyl-D-galactosamine site. A Ricin B-type lectin domain is found at 58–153 (GDSAEYLIIN…DNQKWYFDAK (96 aa)).

In terms of assembly, homodimer.

In terms of biological role, lectin that primarily recognizes glycans with a non-reducing terminal N-acetylgalactosamine (GalNAc), with a preference for the alpha- over the beta-anomer. Can also bind non-reducing terminal galactose (Gal) residues but with a lower affinity. Strongly interacts with glycolipid type glycans with terminal non-reducing Gal or GalNAc but fails to bind sialylated or fucosylated forms of the same glycans. Strongly interacts with galactosylated N-glycans, displaying highest affinity for alpha-1-3 branched mono-antennary N-glycans but also binding to multi-antennary glycans. The sequence is that of Agglutinin from Sclerotinia sclerotiorum (strain ATCC 18683 / 1980 / Ss-1) (White mold).